The sequence spans 450 residues: Phosphoglucosamine mutase (450 aa).

Ser102 functions as the Phosphoserine intermediate in the catalytic mechanism. Residues Ser102, Asp243, Asp245, and Asp247 each contribute to the Mg(2+) site. Position 102 is a phosphoserine (Ser102).

This sequence belongs to the phosphohexose mutase family. Requires Mg(2+) as cofactor. In terms of processing, activated by phosphorylation.

The catalysed reaction is alpha-D-glucosamine 1-phosphate = D-glucosamine 6-phosphate. Catalyzes the conversion of glucosamine-6-phosphate to glucosamine-1-phosphate. This Rhizobium etli (strain CIAT 652) protein is Phosphoglucosamine mutase.